Consider the following 92-residue polypeptide: Small ribosomal subunit protein uS19 (92 aa).

It belongs to the universal ribosomal protein uS19 family.

Its function is as follows. Protein S19 forms a complex with S13 that binds strongly to the 16S ribosomal RNA. In Rhizobium etli (strain CIAT 652), this protein is Small ribosomal subunit protein uS19.